Reading from the N-terminus, the 423-residue chain is UDP-N-acetylglucosamine 1-carboxyvinyltransferase 2 (423 aa).

Position 23–24 (23–24 (KN)) interacts with phosphoenolpyruvate. Position 96 (Arg96) interacts with UDP-N-acetyl-alpha-D-glucosamine. The active-site Proton donor is Cys120. Cys120 is modified (2-(S-cysteinyl)pyruvic acid O-phosphothioketal). UDP-N-acetyl-alpha-D-glucosamine is bound by residues 125 to 129 (RPIDL), Asp309, and Val331.

It belongs to the EPSP synthase family. MurA subfamily.

The protein resides in the cytoplasm. It catalyses the reaction phosphoenolpyruvate + UDP-N-acetyl-alpha-D-glucosamine = UDP-N-acetyl-3-O-(1-carboxyvinyl)-alpha-D-glucosamine + phosphate. The protein operates within cell wall biogenesis; peptidoglycan biosynthesis. Cell wall formation. Adds enolpyruvyl to UDP-N-acetylglucosamine. The chain is UDP-N-acetylglucosamine 1-carboxyvinyltransferase 2 from Streptococcus agalactiae serotype Ia (strain ATCC 27591 / A909 / CDC SS700).